The following is a 353-amino-acid chain: Photosystem II D2 protein (353 aa).

The residue at position 2 (Thr2) is an N-acetylthreonine. Thr2 is subject to Phosphothreonine. The chain crosses the membrane as a helical span at residues 41–61; the sequence is CAYFSLGGWFTGTTFVTSWYT. His118 contacts chlorophyll a. Residues 125 to 141 traverse the membrane as a helical segment; that stretch reads GFMLRQFELARSVQLRP. 2 residues coordinate pheophytin a: Gln130 and Asn143. A helical membrane pass occupies residues 153 to 166; that stretch reads VFVSVFLIYPLGQS. His198 is a binding site for chlorophyll a. A helical membrane pass occupies residues 208-228; the sequence is AALLCAIHGATVENTLFEDGD. 2 residues coordinate a plastoquinone: His215 and Phe262. His215 contacts Fe cation. His269 contacts Fe cation. The chain crosses the membrane as a helical span at residues 279–295; the sequence is GLWMSAIGVVGLALNLR.

It belongs to the reaction center PufL/M/PsbA/D family. In terms of assembly, PSII is composed of 1 copy each of membrane proteins PsbA, PsbB, PsbC, PsbD, PsbE, PsbF, PsbH, PsbI, PsbJ, PsbK, PsbL, PsbM, PsbT, PsbX, PsbY, PsbZ, Psb30/Ycf12, at least 3 peripheral proteins of the oxygen-evolving complex and a large number of cofactors. It forms dimeric complexes. The D1/D2 heterodimer binds P680, chlorophylls that are the primary electron donor of PSII, and subsequent electron acceptors. It shares a non-heme iron and each subunit binds pheophytin, quinone, additional chlorophylls, carotenoids and lipids. There is also a Cl(-1) ion associated with D1 and D2, which is required for oxygen evolution. The PSII complex binds additional chlorophylls, carotenoids and specific lipids. serves as cofactor.

It localises to the plastid. The protein resides in the chloroplast thylakoid membrane. The enzyme catalyses 2 a plastoquinone + 4 hnu + 2 H2O = 2 a plastoquinol + O2. Its function is as follows. Photosystem II (PSII) is a light-driven water:plastoquinone oxidoreductase that uses light energy to abstract electrons from H(2)O, generating O(2) and a proton gradient subsequently used for ATP formation. It consists of a core antenna complex that captures photons, and an electron transfer chain that converts photonic excitation into a charge separation. The D1/D2 (PsbA/PsbD) reaction center heterodimer binds P680, the primary electron donor of PSII as well as several subsequent electron acceptors. D2 is needed for assembly of a stable PSII complex. The polypeptide is Photosystem II D2 protein (Physcomitrium patens (Spreading-leaved earth moss)).